The sequence spans 266 residues: Cysteine-rich repeat secretory protein 41 (266 aa).

The first 26 residues, Met-1–Ser-26, serve as a signal peptide directing secretion. Gnk2-homologous domains follow at residues Tyr-33–Ser-136 and Tyr-142–Phe-253.

This sequence belongs to the cysteine-rich repeat secretory protein family.

The protein localises to the secreted. The chain is Cysteine-rich repeat secretory protein 41 (CRRSP41) from Arabidopsis thaliana (Mouse-ear cress).